The following is a 104-amino-acid chain: Large ribosomal subunit protein uL24 (104 aa).

It belongs to the universal ribosomal protein uL24 family. As to quaternary structure, part of the 50S ribosomal subunit.

Its function is as follows. One of two assembly initiator proteins, it binds directly to the 5'-end of the 23S rRNA, where it nucleates assembly of the 50S subunit. One of the proteins that surrounds the polypeptide exit tunnel on the outside of the subunit. This chain is Large ribosomal subunit protein uL24, found in Bradyrhizobium sp. (strain BTAi1 / ATCC BAA-1182).